The sequence spans 461 residues: PE-PGRS family protein PE_PGRS45 (461 aa).

Positions 4 to 92 (VNVAPQLVST…GSTYAVAEAA (89 aa)) constitute a PE domain. 2 disordered regions span residues 232 to 251 (GGAG…GGNG) and 426 to 461 (AGSL…GADG). A compositionally biased stretch (gly residues) spans 434 to 446 (PGFGGPGGSGGAS).

The protein belongs to the mycobacterial PE family. PGRS subfamily. As to quaternary structure, interacts with human TIMM23, which is part of a complex that mediates the translocation of transit peptide-containing proteins across the mitochondrial inner membrane.

The protein resides in the cell membrane. It is found in the secreted. It localises to the cell wall. Its subcellular location is the host mitochondrion. It catalyses the reaction hexadecanal + NADP(+) + CoA = hexadecanoyl-CoA + NADPH + H(+). With respect to regulation, oxidoreductase activity is inhibited by the first line anti-tubercular drug isoniazid (INH). Functionally, may be an effector protein that contributes to pathogenesis by targeting host mitochondria, where it modulates host cellular processes. In THP1 macrophages, increases the ADP-to-ATP ratio and increases the cellular ROS levels. Also induces mitochondrial perturbations through membrane depolarization, release of mitochondrial superoxide, up-regulation of expression of host proapoptotic proteins (BAX and BIM) and release of cytochrome C into the cytosol. May bind calcium to increase intracellular calcium influx, which may further lead to mitochondrial perturbations. Mitochondrial perturbations and alteration of Ca(2+) influx are independent but simultaneous events. Its function is as follows. In vitro, shows NADPH-dependent fatty acyl coenzyme A oxidoreductase activity. Can oxidize palmitoyl-CoA, but not glutathione and thiourea. The sequence is that of PE-PGRS family protein PE_PGRS45 from Mycobacterium tuberculosis (strain ATCC 25618 / H37Rv).